We begin with the raw amino-acid sequence, 465 residues long: Cysteine--tRNA ligase (465 aa).

Cys27 contacts Zn(2+). The 'HIGH' region motif lies at 29–39; it reads PTVYDDAHLGH. Zn(2+) contacts are provided by Cys207, His237, and Glu241. Positions 269 to 273 match the 'KMSKS' region motif; the sequence is KMSKS. Lys272 is an ATP binding site.

The protein belongs to the class-I aminoacyl-tRNA synthetase family. As to quaternary structure, monomer. Zn(2+) serves as cofactor.

The protein localises to the cytoplasm. The enzyme catalyses tRNA(Cys) + L-cysteine + ATP = L-cysteinyl-tRNA(Cys) + AMP + diphosphate. The polypeptide is Cysteine--tRNA ligase (Helicobacter pylori (strain Shi470)).